A 388-amino-acid polypeptide reads, in one-letter code: Acyl-[acyl-carrier-protein] dehydrogenase MbtN (388 aa).

Belongs to the acyl-CoA dehydrogenase family. FAD is required as a cofactor.

The protein operates within siderophore biosynthesis; mycobactin biosynthesis. In terms of biological role, catalyzes the dehydrogenation at the alpha-beta position of ACP-bound acyl chains. This results in the introduction of a double bond in the lipidic chain, which is further transferred to the epsilon-amino group of lysine residue in the mycobactin core by MbtK. The chain is Acyl-[acyl-carrier-protein] dehydrogenase MbtN (mbtN) from Mycolicibacterium paratuberculosis (strain ATCC BAA-968 / K-10) (Mycobacterium paratuberculosis).